The chain runs to 159 residues: Alpha-lactalbumin (159 aa).

An N-terminal signal peptide occupies residues 1–19 (MMRFVPLFLACISLPAFQA). Residues 20 to 142 (TEFTKCEVSH…KLEQWRCEKP (123 aa)) form the C-type lysozyme domain. Intrachain disulfides connect Cys25–Cys139, Cys47–Cys130, Cys80–Cys96, and Cys92–Cys110. Residue Asn64 is glycosylated (N-linked (GlcNAc...) asparagine). Ca(2+)-binding residues include Lys98, Asp101, Asp106, and Asp107.

It belongs to the glycosyl hydrolase 22 family. Lactose synthase (LS) is a heterodimer of a catalytic component, beta1,4-galactosyltransferase (beta4Gal-T1) and a regulatory component, alpha-lactalbumin (LA). Mammary gland specific. Secreted in milk.

The protein localises to the secreted. Regulatory subunit of lactose synthase, changes the substrate specificity of galactosyltransferase in the mammary gland making glucose a good acceptor substrate for this enzyme. This enables LS to synthesize lactose, the major carbohydrate component of milk. In other tissues, galactosyltransferase transfers galactose onto the N-acetylglucosamine of the oligosaccharide chains in glycoproteins. This is Alpha-lactalbumin (Lalba) from Rattus norvegicus (Rat).